The primary structure comprises 449 residues: Tubulin alpha chain (449 aa).

Residues Gln-11, Glu-71, Ser-140, Gly-144, Thr-145, Thr-179, Asn-206, and Asn-228 each coordinate GTP. Position 71 (Glu-71) interacts with Mg(2+). Glu-254 is a catalytic residue.

It belongs to the tubulin family. In terms of assembly, dimer of alpha and beta chains. A typical microtubule is a hollow water-filled tube with an outer diameter of 25 nm and an inner diameter of 15 nM. Alpha-beta heterodimers associate head-to-tail to form protofilaments running lengthwise along the microtubule wall with the beta-tubulin subunit facing the microtubule plus end conferring a structural polarity. Microtubules usually have 13 protofilaments but different protofilament numbers can be found in some organisms and specialized cells. Mg(2+) serves as cofactor.

It localises to the cytoplasm. The protein resides in the cytoskeleton. The catalysed reaction is GTP + H2O = GDP + phosphate + H(+). In terms of biological role, tubulin is the major constituent of microtubules, a cylinder consisting of laterally associated linear protofilaments composed of alpha- and beta-tubulin heterodimers. Microtubules grow by the addition of GTP-tubulin dimers to the microtubule end, where a stabilizing cap forms. Below the cap, tubulin dimers are in GDP-bound state, owing to GTPase activity of alpha-tubulin. The polypeptide is Tubulin alpha chain (TUB1) (Gibberella zeae (strain ATCC MYA-4620 / CBS 123657 / FGSC 9075 / NRRL 31084 / PH-1) (Wheat head blight fungus)).